A 121-amino-acid polypeptide reads, in one-letter code: Large ribosomal subunit protein uL14c (121 aa).

Belongs to the universal ribosomal protein uL14 family. In terms of assembly, part of the 50S ribosomal subunit.

The protein localises to the plastid. It localises to the chloroplast. Binds to 23S rRNA. The polypeptide is Large ribosomal subunit protein uL14c (Phaeodactylum tricornutum (strain CCAP 1055/1)).